The chain runs to 335 residues: MTDHPPIDTSSYFDCYQQHQLPLQYTFTSSSNSNTSNSSTSPSHISDQFSSSGGPPYELSSHILTPSSVIPTPSPSVASASISSPTIPAFGCTMSEYSMEQMEAISTSLFQARDGDRLVAFFKQLESLYGPNAVDHLRSEAIIVAYTYALYHSNEFETLFHLLSNRHFQQRHYNDLQDIWHHARYKESQLKRGKELNPVEKYRLRRKFPAPKTIWDGEEIVYSFKDSSRKFLKQFFRNVSEYPTQEQKREISRATGLKIVQISNWFKNRRQRDKSNNSAKCSPPSSSSSTNGGSDFLPIITPQSFNLAAAPFNMNMIYGTLRDSQSDNDQFTFNP.

2 disordered regions span residues 27 to 56 (FTSS…GGPP) and 269 to 294 (RRQR…NGGS). Residues 28-41 (TSSSNSNTSNSSTS) show a composition bias toward low complexity. Positions 42–53 (PSHISDQFSSSG) are enriched in polar residues. Residues 225–277 (KDSSRKFLKQFFRNVSEYPTQEQKREISRATGLKIVQISNWFKNRRQRDKSNN) constitute a DNA-binding region (homeobox). Positions 276–294 (NNSAKCSPPSSSSSTNGGS) are enriched in low complexity.

This sequence belongs to the SIX/Sine oculis homeobox family.

The protein resides in the nucleus. In terms of biological role, probable transcription factor required for differentiation and migration of neuronal cells, such as RID and CAN neurons. Specifically, plays a role in the terminal differentiation of RID peptidergic neurons. Also required for CAN neuron axon guidance. The sequence is that of Homeobox protein unc-39 from Caenorhabditis elegans.